Reading from the N-terminus, the 292-residue chain is Glycine--tRNA ligase alpha subunit (292 aa).

The protein belongs to the class-II aminoacyl-tRNA synthetase family. In terms of assembly, tetramer of two alpha and two beta subunits.

It localises to the cytoplasm. The enzyme catalyses tRNA(Gly) + glycine + ATP = glycyl-tRNA(Gly) + AMP + diphosphate. The sequence is that of Glycine--tRNA ligase alpha subunit from Clostridioides difficile (strain 630) (Peptoclostridium difficile).